The following is a 354-amino-acid chain: Guanine nucleotide-binding protein G(i) subunit alpha-1 (354 aa).

G2 is lipidated: N-myristoyl glycine. The S-palmitoyl cysteine moiety is linked to residue C3. The G-alpha domain maps to 32–354 (REVKLLLLGA…KNNLKDCGLF (323 aa)). A G1 motif region spans residues 35-48 (KLLLLGAGESGKST). GTP-binding positions include 43-48 (ESGKST), 150-151 (DS), and 175-178 (LRTR). S47 contributes to the Mg(2+) binding site. The G2 motif stretch occupies residues 173–181 (DVLRTRVKT). A Mg(2+)-binding site is contributed by T181. Residues 196–205 (FKMFDVGGQR) form a G3 motif region. GTP-binding positions include 200 to 204 (DVGGQ), 269 to 272 (NKKD), and A326. Residues 265–272 (ILFLNKKD) are G4 motif. Residues 324–329 (TCATDT) are G5 motif.

The protein belongs to the G-alpha family. G(i/o/t/z) subfamily. Heterotrimeric G proteins are composed of 3 units; alpha, beta and gamma. The alpha chain contains the guanine nucleotide binding site. Part of a spindle orientation complex. Identified in complex with the beta subunit GNB1 and the gamma subunit GNG1. Identified in complex with the beta subunit GNB1 and the gamma subunit GNG2. GTP binding causes dissociation of the heterotrimer, liberating the individual subunits so that they can interact with downstream effector proteins. Myristoylation at Gly-2 is required for membrane anchoring before palmitoylation. In terms of processing, palmitoylation at Cys-3 varies with membrane lipid composition.

It localises to the nucleus. Its subcellular location is the cytoplasm. The protein localises to the cell membrane. It is found in the cytoskeleton. The protein resides in the microtubule organizing center. It localises to the centrosome. Its subcellular location is the cell cortex. The protein localises to the membrane. The enzyme catalyses GTP + H2O = GDP + phosphate + H(+). Functionally, guanine nucleotide-binding proteins (G proteins) function as transducers downstream of G protein-coupled receptors (GPCRs) in numerous signaling cascades. The alpha chain contains the guanine nucleotide binding site and alternates between an active, GTP-bound state and an inactive, GDP-bound state. Signaling by an activated GPCR promotes GDP release and GTP binding. The alpha subunit has a low GTPase activity that converts bound GTP to GDP, thereby terminating the signal. Both GDP release and GTP hydrolysis are modulated by numerous regulatory proteins. Signaling is mediated via effector proteins, such as adenylate cyclase. Inhibits adenylate cyclase activity, leading to decreased intracellular cAMP levels. Required for cortical dynein-dynactin complex recruitment during metaphase. The chain is Guanine nucleotide-binding protein G(i) subunit alpha-1 (gnai1) from Xenopus laevis (African clawed frog).